A 224-amino-acid polypeptide reads, in one-letter code: Protein-L-isoaspartate O-methyltransferase (224 aa).

Ser70 is an active-site residue.

The protein belongs to the methyltransferase superfamily. L-isoaspartyl/D-aspartyl protein methyltransferase family.

The protein localises to the cytoplasm. It catalyses the reaction [protein]-L-isoaspartate + S-adenosyl-L-methionine = [protein]-L-isoaspartate alpha-methyl ester + S-adenosyl-L-homocysteine. Functionally, catalyzes the methyl esterification of L-isoaspartyl residues in peptides and proteins that result from spontaneous decomposition of normal L-aspartyl and L-asparaginyl residues. It plays a role in the repair and/or degradation of damaged proteins. This is Protein-L-isoaspartate O-methyltransferase from Cellvibrio japonicus (strain Ueda107) (Pseudomonas fluorescens subsp. cellulosa).